Here is a 238-residue protein sequence, read N- to C-terminus: Uridylate kinase (238 aa).

12-15 (KLSG) serves as a coordination point for ATP. G54 lines the UMP pocket. Residues G55 and R59 each coordinate ATP. UMP is bound by residues D74 and 135–142 (TGNPYFST). Residues Y168 and D171 each coordinate ATP.

The protein belongs to the UMP kinase family. As to quaternary structure, homohexamer.

The protein resides in the cytoplasm. It carries out the reaction UMP + ATP = UDP + ADP. The protein operates within pyrimidine metabolism; CTP biosynthesis via de novo pathway; UDP from UMP (UMPK route): step 1/1. Its activity is regulated as follows. Inhibited by UTP. Functionally, catalyzes the reversible phosphorylation of UMP to UDP. The polypeptide is Uridylate kinase (Syntrophomonas wolfei subsp. wolfei (strain DSM 2245B / Goettingen)).